The following is a 524-amino-acid chain: MTQPATTPRPVLVVDFGAQYAQLIARRVREASIYSEVVPHSATVKEIKAKNPAALILSGGPSSVYADGAPQLKPELLELGVPVFGICYGFQAMNHALGGNVAQTGDREYGRTEITHTGGVLHDGLEENHKVWMSHGDAVDKAPEGFTVTASSAGAPVAAMECVAKQMAGVQYHPEVMHSPHGQEVLVRFLTEVAGLEQTWTSANIAQQLIDDVRAQIGPEGRAICGLSGGVDSAVAAALVQRAIGDRLTCVFVDHGLLRAGEREQVEKDFVASTGAKLITAHEADAFLSKLAGVTDPEAKRKAIGAEFIRSFERAVAQALEESPEDSTVDFLVQGTLYPDVVESGGGDGTANIKSHHNVGGLPDDVEFELVEPLRLLFKDEVRAVGRELGLPEEIVARQPFPGPGLGIRIIGEVTEERLEILRQADLIARTELTNAGLDGDIWQCPVVLLADVRSVGVQGDGRTYGHPIVLRPVSSEDAMTADWTRVPYDVLEKISTRITNEVNDVNRVVVDITSKPPGTIEWE.

The Glutamine amidotransferase type-1 domain maps to proline 10–threonine 199. Catalysis depends on cysteine 87, which acts as the Nucleophile. Catalysis depends on residues histidine 173 and glutamate 175. The 199-residue stretch at tryptophan 200 to arginine 398 folds into the GMPS ATP-PPase domain. Serine 228 to alanine 234 provides a ligand contact to ATP.

As to quaternary structure, homodimer.

It carries out the reaction XMP + L-glutamine + ATP + H2O = GMP + L-glutamate + AMP + diphosphate + 2 H(+). The protein operates within purine metabolism; GMP biosynthesis; GMP from XMP (L-Gln route): step 1/1. Functionally, catalyzes the synthesis of GMP from XMP. The polypeptide is GMP synthase [glutamine-hydrolyzing] (guaA) (Corynebacterium ammoniagenes (Brevibacterium ammoniagenes)).